The chain runs to 648 residues: Acetyl-coenzyme A synthetase (648 aa).

Residues 191–194 (RGGR), threonine 310, and asparagine 334 contribute to the CoA site. ATP is bound by residues 386–388 (GEP), 410–415 (DTWWQT), aspartate 499, and arginine 514. A CoA-binding site is contributed by serine 522. Arginine 525 is an ATP binding site. Mg(2+) contacts are provided by valine 536, histidine 538, and isoleucine 541. Arginine 583 contributes to the CoA binding site. N6-acetyllysine is present on lysine 608.

This sequence belongs to the ATP-dependent AMP-binding enzyme family. Mg(2+) is required as a cofactor. In terms of processing, acetylated. Deacetylation by the SIR2-homolog deacetylase activates the enzyme.

The enzyme catalyses acetate + ATP + CoA = acetyl-CoA + AMP + diphosphate. Functionally, catalyzes the conversion of acetate into acetyl-CoA (AcCoA), an essential intermediate at the junction of anabolic and catabolic pathways. AcsA undergoes a two-step reaction. In the first half reaction, AcsA combines acetate with ATP to form acetyl-adenylate (AcAMP) intermediate. In the second half reaction, it can then transfer the acetyl group from AcAMP to the sulfhydryl group of CoA, forming the product AcCoA. This Aeromonas hydrophila subsp. hydrophila (strain ATCC 7966 / DSM 30187 / BCRC 13018 / CCUG 14551 / JCM 1027 / KCTC 2358 / NCIMB 9240 / NCTC 8049) protein is Acetyl-coenzyme A synthetase.